The primary structure comprises 1024 residues: Carbamoyl phosphate synthase large chain (1024 aa).

The tract at residues 1–402 (MPKRTDLQTI…SLQKALRSTE (402 aa)) is carboxyphosphate synthetic domain. Residues arginine 129, arginine 169, glycine 175, glycine 176, glutamate 208, isoleucine 210, glutamate 215, glycine 241, valine 242, histidine 243, glutamine 285, and glutamate 299 each coordinate ATP. One can recognise an ATP-grasp 1 domain in the interval 133–328 (QAAMKKIGVE…IAKIAALLAV (196 aa)). The Mg(2+) site is built by glutamine 285, glutamate 299, and asparagine 301. Mn(2+)-binding residues include glutamine 285, glutamate 299, and asparagine 301. The tract at residues 403 to 546 (GDIRGVYAEM…YSTYEWEDEV (144 aa)) is oligomerization domain. The tract at residues 547–929 (APTDKPKVVI…AFYRAQLGAK (383 aa)) is carbamoyl phosphate synthetic domain. Positions 671 to 863 (NALCERLGLP…LAKSAARIAA (193 aa)) constitute an ATP-grasp 2 domain. ATP is bound by residues arginine 707, glutamine 747, leucine 749, glutamate 754, glycine 779, valine 780, histidine 781, serine 782, glutamine 822, and glutamate 834. Residues glutamine 822, glutamate 834, and asparagine 836 each contribute to the Mg(2+) site. 3 residues coordinate Mn(2+): glutamine 822, glutamate 834, and asparagine 836. An MGS-like domain is found at 930–1024 (NYLPLEGTAL…GVRSLQEWVK (95 aa)). The segment at 930 to 1024 (NYLPLEGTAL…GVRSLQEWVK (95 aa)) is allosteric domain.

Belongs to the CarB family. Composed of two chains; the small (or glutamine) chain promotes the hydrolysis of glutamine to ammonia, which is used by the large (or ammonia) chain to synthesize carbamoyl phosphate. Tetramer of heterodimers (alpha,beta)4. The cofactor is Mg(2+). Mn(2+) is required as a cofactor.

It catalyses the reaction hydrogencarbonate + L-glutamine + 2 ATP + H2O = carbamoyl phosphate + L-glutamate + 2 ADP + phosphate + 2 H(+). The enzyme catalyses hydrogencarbonate + NH4(+) + 2 ATP = carbamoyl phosphate + 2 ADP + phosphate + 2 H(+). It participates in amino-acid biosynthesis; L-arginine biosynthesis; carbamoyl phosphate from bicarbonate: step 1/1. Its pathway is pyrimidine metabolism; UMP biosynthesis via de novo pathway; (S)-dihydroorotate from bicarbonate: step 1/3. Large subunit of the glutamine-dependent carbamoyl phosphate synthetase (CPSase). CPSase catalyzes the formation of carbamoyl phosphate from the ammonia moiety of glutamine, carbonate, and phosphate donated by ATP, constituting the first step of 2 biosynthetic pathways, one leading to arginine and/or urea and the other to pyrimidine nucleotides. The large subunit (synthetase) binds the substrates ammonia (free or transferred from glutamine from the small subunit), hydrogencarbonate and ATP and carries out an ATP-coupled ligase reaction, activating hydrogencarbonate by forming carboxy phosphate which reacts with ammonia to form carbamoyl phosphate. In Deinococcus radiodurans (strain ATCC 13939 / DSM 20539 / JCM 16871 / CCUG 27074 / LMG 4051 / NBRC 15346 / NCIMB 9279 / VKM B-1422 / R1), this protein is Carbamoyl phosphate synthase large chain.